A 126-amino-acid chain; its full sequence is Anti-adapter protein IraD (126 aa).

Belongs to the GpW/Gp25 family. IraD subfamily. Interacts with RssB.

The protein localises to the cytoplasm. Inhibits RpoS proteolysis by regulating RssB activity, thereby increasing the stability of the sigma stress factor RpoS during oxidative stress. Its effect on RpoS stability is due to its interaction with RssB, which probably blocks the interaction of RssB with RpoS, and the consequent delivery of the RssB-RpoS complex to the ClpXP protein degradation pathway. The sequence is that of Anti-adapter protein IraD from Salmonella enteritidis PT4 (strain P125109).